We begin with the raw amino-acid sequence, 196 residues long: Imidazoleglycerol-phosphate dehydratase (196 aa).

It belongs to the imidazoleglycerol-phosphate dehydratase family.

The protein resides in the cytoplasm. It catalyses the reaction D-erythro-1-(imidazol-4-yl)glycerol 3-phosphate = 3-(imidazol-4-yl)-2-oxopropyl phosphate + H2O. The protein operates within amino-acid biosynthesis; L-histidine biosynthesis; L-histidine from 5-phospho-alpha-D-ribose 1-diphosphate: step 6/9. This Clostridium botulinum (strain 657 / Type Ba4) protein is Imidazoleglycerol-phosphate dehydratase.